The sequence spans 649 residues: DNA topoisomerase 3 (649 aa).

The Toprim domain occupies 1-134 (MRLFIAEKPS…KRQQVRRCLI (134 aa)). Mg(2+) is bound by residues Glu7, Asp103, and Asp105. In terms of domain architecture, Topo IA-type catalytic spans 155–603 (FVPLCVSALA…PLVGTLYQLI (449 aa)). The interval 194 to 199 (SVGRVQ) is interaction with DNA. The active-site O-(5'-phospho-DNA)-tyrosine intermediate is the Tyr328. Residues 614–649 (FRGIVAPGGGDKKKSAPRKRAGKKSPPAAETGRQTE) are disordered.

It belongs to the type IA topoisomerase family. Mg(2+) serves as cofactor.

It carries out the reaction ATP-independent breakage of single-stranded DNA, followed by passage and rejoining.. Its function is as follows. Releases the supercoiling and torsional tension of DNA, which is introduced during the DNA replication and transcription, by transiently cleaving and rejoining one strand of the DNA duplex. Introduces a single-strand break via transesterification at a target site in duplex DNA. The scissile phosphodiester is attacked by the catalytic tyrosine of the enzyme, resulting in the formation of a DNA-(5'-phosphotyrosyl)-enzyme intermediate and the expulsion of a 3'-OH DNA strand. The free DNA strand then undergoes passage around the unbroken strand, thus removing DNA supercoils. Finally, in the religation step, the DNA 3'-OH attacks the covalent intermediate to expel the active-site tyrosine and restore the DNA phosphodiester backbone. The polypeptide is DNA topoisomerase 3 (Salmonella typhimurium (strain LT2 / SGSC1412 / ATCC 700720)).